Reading from the N-terminus, the 406-residue chain is Succinylornithine transaminase/acetylornithine aminotransferase (406 aa).

Residues 108-109 (GA) and Phe141 contribute to the pyridoxal 5'-phosphate site. A N(2)-acetyl-L-ornithine-binding site is contributed by Arg144. 226-229 (DEVQ) is a pyridoxal 5'-phosphate binding site. Lys255 is subject to N6-(pyridoxal phosphate)lysine. Residue Thr283 participates in N(2)-acetyl-L-ornithine binding. Thr284 lines the pyridoxal 5'-phosphate pocket.

Belongs to the class-III pyridoxal-phosphate-dependent aminotransferase family. ArgD subfamily. In terms of assembly, homodimer. Requires pyridoxal 5'-phosphate as cofactor.

Its subcellular location is the cytoplasm. It carries out the reaction N(2)-succinyl-L-ornithine + 2-oxoglutarate = N-succinyl-L-glutamate 5-semialdehyde + L-glutamate. It catalyses the reaction N(2)-acetyl-L-ornithine + 2-oxoglutarate = N-acetyl-L-glutamate 5-semialdehyde + L-glutamate. Its pathway is amino-acid biosynthesis; L-arginine biosynthesis; N(2)-acetyl-L-ornithine from L-glutamate: step 4/4. The protein operates within amino-acid degradation; L-arginine degradation via AST pathway; L-glutamate and succinate from L-arginine: step 3/5. Its function is as follows. Transaminates both N(2)-acetylornithine and N(2)-succinylornithine. The chain is Succinylornithine transaminase/acetylornithine aminotransferase (aruC) from Pseudomonas aeruginosa (strain ATCC 15692 / DSM 22644 / CIP 104116 / JCM 14847 / LMG 12228 / 1C / PRS 101 / PAO1).